The sequence spans 80 residues: Exodeoxyribonuclease 7 small subunit (80 aa).

This sequence belongs to the XseB family. In terms of assembly, heterooligomer composed of large and small subunits.

It is found in the cytoplasm. The catalysed reaction is Exonucleolytic cleavage in either 5'- to 3'- or 3'- to 5'-direction to yield nucleoside 5'-phosphates.. Functionally, bidirectionally degrades single-stranded DNA into large acid-insoluble oligonucleotides, which are then degraded further into small acid-soluble oligonucleotides. This is Exodeoxyribonuclease 7 small subunit from Oleidesulfovibrio alaskensis (strain ATCC BAA-1058 / DSM 17464 / G20) (Desulfovibrio alaskensis).